Consider the following 320-residue polypeptide: Cytochrome f (320 aa).

Positions methionine 1 to alanine 35 are cleaved as a signal peptide. Tyrosine 36, cysteine 56, cysteine 59, and histidine 60 together coordinate heme. A helical transmembrane segment spans residues valine 286 to lysine 306.

It belongs to the cytochrome f family. The 4 large subunits of the cytochrome b6-f complex are cytochrome b6, subunit IV (17 kDa polypeptide, petD), cytochrome f and the Rieske protein, while the 4 small subunits are PetG, PetL, PetM and PetN. The complex functions as a dimer. Heme serves as cofactor.

The protein localises to the plastid thylakoid membrane. Functionally, component of the cytochrome b6-f complex, which mediates electron transfer between photosystem II (PSII) and photosystem I (PSI), cyclic electron flow around PSI, and state transitions. The polypeptide is Cytochrome f (Cuscuta obtusiflora (Peruvian dodder)).